The following is a 430-amino-acid chain: Trigger factor (430 aa).

Residues 157-242 (GDLVALETWS…AVEVSEPVLP (86 aa)) enclose the PPIase FKBP-type domain.

The protein belongs to the FKBP-type PPIase family. Tig subfamily.

The protein resides in the cytoplasm. It catalyses the reaction [protein]-peptidylproline (omega=180) = [protein]-peptidylproline (omega=0). Functionally, involved in protein export. Acts as a chaperone by maintaining the newly synthesized protein in an open conformation. Functions as a peptidyl-prolyl cis-trans isomerase. This is Trigger factor from Xanthomonas axonopodis pv. citri (strain 306).